The chain runs to 211 residues: uncharacterized protein (211 aa).

Residues 105-143 (IEENEFDKVRKSSDKLINEIEKTKSSLREDVKTALSEVR) adopt a coiled-coil conformation. A helical membrane pass occupies residues 191–211 (QWFTGFVGVVSSVVLIILFYF).

It belongs to the CCDC90 family.

It localises to the mitochondrion. It is found in the membrane. This is an uncharacterized protein from Schizosaccharomyces pombe (strain 972 / ATCC 24843) (Fission yeast).